A 308-amino-acid chain; its full sequence is Beta-1,3-galactosyltransferase 5 (308 aa).

The Cytoplasmic portion of the chain corresponds to 1–7; sequence MAHMKTR. The helical; Signal-anchor for type II membrane protein transmembrane segment at 8 to 25 threads the bilayer; the sequence is LVYASILMMGALCLYFSM. Residues 26–308 are Lumenal-facing; sequence DSFRELPFVF…NSKEQDCPAV (283 aa). N-linked (GlcNAc...) asparagine glycans are attached at residues Asn-128, Asn-172, and Asn-229.

This sequence belongs to the glycosyltransferase 31 family. As to expression, expressed in brain and kidney.

It is found in the golgi apparatus membrane. The catalysed reaction is a globoside Gb4Cer (d18:1(4E)) + UDP-alpha-D-galactose = a globoside GalGb4Cer (d18:1(4E)) + UDP + H(+). It participates in protein modification; protein glycosylation. Catalyzes the transfer of Gal to GlcNAc-based acceptors with a preference for the core3 O-linked glycan GlcNAc(beta1,3)GalNAc structure. Can use glycolipid LC3Cer as an efficient acceptor. Also catalyzes the transfer of Gal to the terminal GalNAc unit of the globoside GB4, thereby synthesizing the glycolipid GB5, also known as the stage-specific embryonic antigen-3 (SSEA-3). The chain is Beta-1,3-galactosyltransferase 5 from Mus musculus (Mouse).